Here is a 117-residue protein sequence, read N- to C-terminus: Phosphoribosyl-ATP pyrophosphatase (117 aa).

Over residues 96-105 (GVSGIEEKLS) the composition is skewed to basic and acidic residues. The interval 96-117 (GVSGIEEKLSRSQNQPEPTKAE) is disordered. The segment covering 106–117 (RSQNQPEPTKAE) has biased composition (polar residues).

Belongs to the PRA-PH family.

It localises to the cytoplasm. It catalyses the reaction 1-(5-phospho-beta-D-ribosyl)-ATP + H2O = 1-(5-phospho-beta-D-ribosyl)-5'-AMP + diphosphate + H(+). It participates in amino-acid biosynthesis; L-histidine biosynthesis; L-histidine from 5-phospho-alpha-D-ribose 1-diphosphate: step 2/9. The sequence is that of Phosphoribosyl-ATP pyrophosphatase from Nitrosomonas eutropha (strain DSM 101675 / C91 / Nm57).